The sequence spans 59 residues: UPF0434 protein LHK_01103 (59 aa).

It belongs to the UPF0434 family.

The protein is UPF0434 protein LHK_01103 of Laribacter hongkongensis (strain HLHK9).